The primary structure comprises 159 residues: Neurotrophin-3 (159 aa).

The signal sequence occupies residues 1-3 (IQS). Residues 4 to 115 (TSMDQGILTE…VQNRTSRRKR (112 aa)) constitute a propeptide that is removed on maturation. The interval 91–129 (APLEPPPLYLTEEPLVQNRTSRRKREGKRHRGEYSVCDS) is disordered. N-linked (GlcNAc...) asparagine glycosylation occurs at N108. The segment covering 110–121 (TSRRKREGKRHR) has biased composition (basic residues).

Belongs to the NGF-beta family.

It localises to the secreted. Functionally, seems to promote the survival of visceral and proprioceptive sensory neurons. The sequence is that of Neurotrophin-3 (NTF3) from Candoia carinata (Papuan tree boa).